The primary structure comprises 241 residues: MKFILLWALLNLTVALAFNPDYTVSSTPPYLVYLKSDYLPCAGVLIHPLWVITAAHCNLPKLRVILGVTIPADSNEKHLQVIGYEKMIHHPHFSVTSIDHDIMLIKLKTEAELNDYVKLANLPYQTISENTMCSVSTWSYNVCDIYKEPDSLQTVNISVISKPQCRDAYKTYNITENMLCVGIVPGRRQPCKEVSAAPAICNGMLQGILSFADGCVLRADVGIYAKIFYYIPWIENVIQNN.

Residues 1–17 (MKFILLWALLNLTVALA) form the signal peptide. A Peptidase S1 domain is found at 18 to 239 (FNPDYTVSST…YIPWIENVIQ (222 aa)). The cysteines at positions 41 and 57 are disulfide-linked. Residues H56 and D101 each act as charge relay system in the active site. Disulfide bonds link C133–C201, C165–C180, and C191–C215. Residues N156 and N173 are each glycosylated (N-linked (GlcNAc...) asparagine). The Charge relay system role is filled by S195.

The protein belongs to the peptidase S1 family.

It localises to the secreted. It carries out the reaction Preferential cleavage: Arg-|-Xaa, Lys-|-Xaa.. The polypeptide is Serine protease 58 (PRSS58) (Homo sapiens (Human)).